A 307-amino-acid polypeptide reads, in one-letter code: UDP-N-acetylenolpyruvoylglucosamine reductase (307 aa).

In terms of domain architecture, FAD-binding PCMH-type spans 34-198 (TGGNADFYLS…LEAAFTLEPG (165 aa)). R177 is an active-site residue. The active-site Proton donor is the S227. The active site involves E297.

Belongs to the MurB family. The cofactor is FAD.

It localises to the cytoplasm. It catalyses the reaction UDP-N-acetyl-alpha-D-muramate + NADP(+) = UDP-N-acetyl-3-O-(1-carboxyvinyl)-alpha-D-glucosamine + NADPH + H(+). Its pathway is cell wall biogenesis; peptidoglycan biosynthesis. Functionally, cell wall formation. This chain is UDP-N-acetylenolpyruvoylglucosamine reductase, found in Staphylococcus haemolyticus (strain JCSC1435).